We begin with the raw amino-acid sequence, 199 residues long: Putative HMP/thiamine permease protein YkoE (199 aa).

Helical transmembrane passes span 9–29, 40–60, 63–83, 85–105, 114–134, and 143–163; these read IVIMSVISIVFAVVYLLFTHF, IAYEPIYGIWFIVSVIAAYMI, PGAALVSEIIAALVECLLGNP, GPMVIVIGIVQGLGAEAVFLA, PVLMLAGMGSSVASFIYDLFV, and GYLLIMLVIRLISGALLAGLL.

The complex is composed of two ATP-binding proteins (YkoD), two transmembrane proteins (YkoC and YkoE) and a solute-binding protein (YkoF).

The protein resides in the cell membrane. Functionally, part of the ABC transporter complex YkoCDEF that could transport hydroxymethylpyrimidine (HMP) and/or thiamine. Could also transport other HMP-containing products. Probably responsible for the translocation of the substrate across the membrane. This chain is Putative HMP/thiamine permease protein YkoE (ykoE), found in Bacillus subtilis (strain 168).